We begin with the raw amino-acid sequence, 311 residues long: MANIKEIARLANVSVSTVSRVLNHHPYVSEEKRKLVHQVMKELDYTPNRTAIDLIRGKTHTVGVILPYSDHPCFDKIVNGITKAAFQHEYATTLLPTNYNPDIEIKYLELLRTKKIDGLIITSRANHWDSILAYQEYGPVIACEDTGDIDVPCAFNDRKTAYAESFRYLKSRGHENIAFTCVREADRSPSTADKAAAYKAVCGRLEDRHMLSGCNDMNDGELAAEHFYMSGRVPTAIYANSDEVAAGIHLFAKKNNWDVEIIGEGNTSISRVLGFPSLDLNLEQLGIAAFSLFLQDEPADIKIQHKFKKKA.

Residues 1-56 enclose the HTH lacI-type domain; sequence MANIKEIARLANVSVSTVSRVLNHHPYVSEEKRKLVHQVMKELDYTPNRTAIDLIR. A DNA-binding region (H-T-H motif) is located at residues 4–23; the sequence is IKEIARLANVSVSTVSRVLN.

Seems to be complexed to phosphorylated HPr.

Its function is as follows. Transcriptional regulator involved in catabolite repression of several operons. The sequence is that of Catabolite control protein B (ccpB) from Bacillus subtilis (strain 168).